A 129-amino-acid chain; its full sequence is Keratin-associated protein 5-6 (129 aa).

6 repeat units span residues 28-31 (CCVP), 34-37 (CCKP), 40-43 (CCVP), 90-93 (CCKP), 109-112 (CCKP), and 119-122 (CCVP). The interval 28-112 (CCVPICCCKP…SCCQSSCCKP (85 aa)) is 6 X 4 AA repeats of C-C-X-P.

Belongs to the KRTAP type 5 family. In terms of assembly, interacts with hair keratins. Expressed in hair root and not in skin. Expressed also in liver and skeletal muscle.

In terms of biological role, in the hair cortex, hair keratin intermediate filaments are embedded in an interfilamentous matrix, consisting of hair keratin-associated protein (KRTAP), which are essential for the formation of a rigid and resistant hair shaft through their extensive disulfide bond cross-linking with abundant cysteine residues of hair keratins. The matrix proteins include the high-sulfur and high-glycine-tyrosine keratins. The protein is Keratin-associated protein 5-6 (KRTAP5-6) of Homo sapiens (Human).